The following is a 658-amino-acid chain: Glycogen debranching enzyme (658 aa).

The Nucleophile role is filled by D336. E371 (proton donor) is an active-site residue. Residues 459–483 (EANGEENRDGTNSNYSDNHGKEGLG) form a disordered region.

This sequence belongs to the glycosyl hydrolase 13 family.

It carries out the reaction Hydrolysis of (1-&gt;6)-alpha-D-glucosidic linkages to branches with degrees of polymerization of three or four glucose residues in limit dextrin.. It participates in glycan degradation; glycogen degradation. In terms of biological role, removes maltotriose and maltotetraose chains that are attached by 1,6-alpha-linkage to the limit dextrin main chain, generating a debranched limit dextrin. This is Glycogen debranching enzyme from Salmonella agona (strain SL483).